A 263-amino-acid polypeptide reads, in one-letter code: Undecaprenyl-diphosphatase (263 aa).

Transmembrane regions (helical) follow at residues 1 to 21 (MSYLHAIILGIVEGITEFLPI), 41 to 61 (FTKAFEVIIQFGAIMSVLVLY), 69 to 89 (WGFYRKLFVAFLPTAIIGFVV), 96 to 116 (LMGSVQVVAWSLIIGGVILIW), 147 to 167 (AIAMIPGVSRSGATIMGGLTL), 177 to 197 (FSFFLAVPTMAAATLYKLLKI), 208 to 228 (LLLVGCAVAFVVAMIAIKFFI), and 238 to 258 (GFGYYRIVLGLVILILLYTGH).

This sequence belongs to the UppP family.

The protein resides in the cell inner membrane. It carries out the reaction di-trans,octa-cis-undecaprenyl diphosphate + H2O = di-trans,octa-cis-undecaprenyl phosphate + phosphate + H(+). Catalyzes the dephosphorylation of undecaprenyl diphosphate (UPP). Confers resistance to bacitracin. This chain is Undecaprenyl-diphosphatase, found in Bdellovibrio bacteriovorus (strain ATCC 15356 / DSM 50701 / NCIMB 9529 / HD100).